The following is a 243-amino-acid chain: MSKTVIAGNWKMHMTCAQARDFISAYLPLIKNVPKGRELVLAPPFTAISTLSEILKGSNVSLSSQNVHWEDNGAFTAEISPKMLLEHSVSYAIVGHSEPRKYFSESDKQINLRAKSAQANGLIPIVCVGETIEQRERGEAERVIRRQVEQGLEETDKKKLIVAYEPIWAIGTGKTCEANEANRICGLIRQWANCPEILIQYGGSVKPGNIDEIMAMSDIDGVLVGGASLDPESFARISNYKVE.

9–11 (NWK) serves as a coordination point for substrate. H96 functions as the Electrophile in the catalytic mechanism. The active-site Proton acceptor is E165. Substrate is bound by residues G171, S204, and 225 to 226 (GG).

The protein belongs to the triosephosphate isomerase family. As to quaternary structure, homodimer.

Its subcellular location is the cytoplasm. The catalysed reaction is D-glyceraldehyde 3-phosphate = dihydroxyacetone phosphate. Its pathway is carbohydrate biosynthesis; gluconeogenesis. The protein operates within carbohydrate degradation; glycolysis; D-glyceraldehyde 3-phosphate from glycerone phosphate: step 1/1. Its function is as follows. Involved in the gluconeogenesis. Catalyzes stereospecifically the conversion of dihydroxyacetone phosphate (DHAP) to D-glyceraldehyde-3-phosphate (G3P). The sequence is that of Triosephosphate isomerase from Prochlorococcus marinus (strain MIT 9211).